The primary structure comprises 397 residues: Elongation factor Tu (397 aa).

One can recognise a tr-type G domain in the interval 10-207 (LPHCNVGTIG…TLDSYIPQPE (198 aa)). The tract at residues 19–26 (GHVDHGKT) is G1. Position 19-26 (19-26 (GHVDHGKT)) interacts with GTP. Thr26 lines the Mg(2+) pocket. The tract at residues 60-64 (GITIN) is G2. The interval 81–84 (DCPG) is G3. GTP-binding positions include 81-85 (DCPGH) and 136-139 (NKAD). Residues 136 to 139 (NKAD) are G4. The tract at residues 174–176 (SAR) is G5.

Belongs to the TRAFAC class translation factor GTPase superfamily. Classic translation factor GTPase family. EF-Tu/EF-1A subfamily. As to quaternary structure, monomer.

The protein resides in the cytoplasm. The catalysed reaction is GTP + H2O = GDP + phosphate + H(+). In terms of biological role, GTP hydrolase that promotes the GTP-dependent binding of aminoacyl-tRNA to the A-site of ribosomes during protein biosynthesis. In Pseudomonas syringae pv. tomato (strain ATCC BAA-871 / DC3000), this protein is Elongation factor Tu.